The chain runs to 165 residues: SsrA-binding protein (165 aa).

The protein belongs to the SmpB family.

Its subcellular location is the cytoplasm. In terms of biological role, required for rescue of stalled ribosomes mediated by trans-translation. Binds to transfer-messenger RNA (tmRNA), required for stable association of tmRNA with ribosomes. tmRNA and SmpB together mimic tRNA shape, replacing the anticodon stem-loop with SmpB. tmRNA is encoded by the ssrA gene; the 2 termini fold to resemble tRNA(Ala) and it encodes a 'tag peptide', a short internal open reading frame. During trans-translation Ala-aminoacylated tmRNA acts like a tRNA, entering the A-site of stalled ribosomes, displacing the stalled mRNA. The ribosome then switches to translate the ORF on the tmRNA; the nascent peptide is terminated with the 'tag peptide' encoded by the tmRNA and targeted for degradation. The ribosome is freed to recommence translation, which seems to be the essential function of trans-translation. The protein is SsrA-binding protein of Parvibaculum lavamentivorans (strain DS-1 / DSM 13023 / NCIMB 13966).